We begin with the raw amino-acid sequence, 197 residues long: Imidazoleglycerol-phosphate dehydratase (197 aa).

It belongs to the imidazoleglycerol-phosphate dehydratase family.

It localises to the cytoplasm. It carries out the reaction D-erythro-1-(imidazol-4-yl)glycerol 3-phosphate = 3-(imidazol-4-yl)-2-oxopropyl phosphate + H2O. Its pathway is amino-acid biosynthesis; L-histidine biosynthesis; L-histidine from 5-phospho-alpha-D-ribose 1-diphosphate: step 6/9. In Pseudomonas aeruginosa (strain LESB58), this protein is Imidazoleglycerol-phosphate dehydratase.